Consider the following 182-residue polypeptide: Spermatophorin SP23 (182 aa).

The signal sequence occupies residues 1-7 (MVASIAG). 3 disordered regions span residues 1 to 26 (MVAS…FQPY), 56 to 79 (FQTI…NSIE), and 104 to 136 (IVVN…PPTI). Residues 109–128 (APPPPPVIYQAPPPPPPPPI) are compositionally biased toward pro residues.

As to expression, spermatophore.

It localises to the secreted. Its function is as follows. Structural protein of a layer within the wall of the spermatophore produced probably by cell type 4 of the bean-shaped gland (BAG). Fixation in the spermatophore seems to require covalent cross-linking of spermatophorins. The protein is Spermatophorin SP23 (SP23) of Tenebrio molitor (Yellow mealworm beetle).